The chain runs to 181 residues: Oligoribonuclease (181 aa).

Residues Leu8–Leu171 form the Exonuclease domain. Tyr129 is an active-site residue.

Belongs to the oligoribonuclease family.

It is found in the cytoplasm. Its function is as follows. 3'-to-5' exoribonuclease specific for small oligoribonucleotides. The polypeptide is Oligoribonuclease (Aliivibrio fischeri (strain ATCC 700601 / ES114) (Vibrio fischeri)).